A 149-amino-acid polypeptide reads, in one-letter code: FAD synthase (149 aa).

Residues 9 to 10 (VF), 14 to 17 (HPGH), aspartate 93, and tyrosine 120 each bind ATP.

Belongs to the archaeal FAD synthase family. Homodimer. It depends on a divalent metal cation as a cofactor.

It catalyses the reaction FMN + ATP + H(+) = FAD + diphosphate. It functions in the pathway cofactor biosynthesis; FAD biosynthesis; FAD from FMN: step 1/1. In terms of biological role, catalyzes the transfer of the AMP portion of ATP to flavin mononucleotide (FMN) to produce flavin adenine dinucleotide (FAD) coenzyme. This Aciduliprofundum boonei (strain DSM 19572 / T469) protein is FAD synthase.